We begin with the raw amino-acid sequence, 361 residues long: Peptide chain release factor 1 (361 aa).

An N5-methylglutamine modification is found at glutamine 237.

This sequence belongs to the prokaryotic/mitochondrial release factor family. Methylated by PrmC. Methylation increases the termination efficiency of RF1.

The protein resides in the cytoplasm. Functionally, peptide chain release factor 1 directs the termination of translation in response to the peptide chain termination codons UAG and UAA. This is Peptide chain release factor 1 from Alcanivorax borkumensis (strain ATCC 700651 / DSM 11573 / NCIMB 13689 / SK2).